Reading from the N-terminus, the 489-residue chain is MDLLIILGICLSCVVLLSLWKKTHGKGKLPPGPTPLPVVGNLLQLETKDINKSLSMLAKEYGSIFTLYFGMKPAVVLYGYEGVIEALIDRGEEFSGRGIFPVFDRVTKGLGIVFSSGEKWKETRRFSLTVLRNLGMGKKTIEERIQEEALCLIQALRKTNASPCDPTFLLFCVPCNVICSVIFQNRFDYDDEKFKTLIKYFHENFELLGTPWIQLYNIFPILHYLPGSHRQLFKNIDGQIKFILEKVQEHQESLDSNNPRDFVDHFLIKMEKEKHKKQSEFTMDNLITTIWDVFSAGTDTTSNTLKFALLLLLKHPEITAKVQEEIEHVIGRHRSPCMQDRTRMPYTDAVMHEIQRYVDLVPTSLPHAVTQDIEFNGYLIPKGTDIIPSLTSVLYDDKEFPNPEKFDPGHFLDESGNFKKSDYFMPFSAGKRACVGEGLARMELFLLLTTILQHFTLKPLVDPKDIDPTPVENGFVSVPPSYELCFVPV.

Residue Cys-434 coordinates heme.

It belongs to the cytochrome P450 family. Heme serves as cofactor.

The protein resides in the endoplasmic reticulum membrane. The protein localises to the microsome membrane. It carries out the reaction an organic molecule + reduced [NADPH--hemoprotein reductase] + O2 = an alcohol + oxidized [NADPH--hemoprotein reductase] + H2O + H(+). Functionally, cytochromes P450 are a group of heme-thiolate monooxygenases. In liver microsomes, this enzyme is involved in an NADPH-dependent electron transport pathway. It oxidizes a variety of structurally unrelated compounds, including steroids, fatty acids, and xenobiotics. The polypeptide is Cytochrome P450 2C3 (CYP2C3) (Oryctolagus cuniculus (Rabbit)).